Reading from the N-terminus, the 202-residue chain is MAEEEPKKVTETVSEPTPTPEVPVEKPAAAADVAPQEKPVAPPPVLPSPAPAEEKQEDSKAIVPVVPKEVEEEKKEGSVNRDAVLARVETEKRMSLIKAWEEAEKCKVENKAEKKLSSIGSWENNKKAAVEAELKKMEEQLEKKKAEYVEQMKNKIAQIHKEAEEKRAMIEAKRGEEILKAEELAAKYRATGTAPKKLFGCM.

The span at 1–10 shows a compositional bias: basic and acidic residues; sequence MAEEEPKKVT. The interval 1–79 is disordered; that stretch reads MAEEEPKKVT…VEEEKKEGSV (79 aa). Low complexity predominate over residues 25-39; that stretch reads EKPAAAADVAPQEKP. Pro residues predominate over residues 40 to 50; that stretch reads VAPPPVLPSPA. Residues 68 to 79 show a composition bias toward basic and acidic residues; the sequence is KEVEEEKKEGSV. Residues 123-169 are a coiled coil; that stretch reads ENNKKAAVEAELKKMEEQLEKKKAEYVEQMKNKIAQIHKEAEEKRAM.

The protein belongs to the remorin family.

This is Remorin 1.4 from Arabidopsis thaliana (Mouse-ear cress).